Consider the following 224-residue polypeptide: Probable proteasome subunit beta type-4 (224 aa).

Belongs to the peptidase T1B family. As to quaternary structure, the 26S proteasome consists of a 20S proteasome core and two 19S regulatory subunits. The 20S proteasome core is composed of 28 subunits that are arranged in four stacked rings, resulting in a barrel-shaped structure. The two end rings are each formed by seven alpha subunits, and the two central rings are each formed by seven beta subunits. The catalytic chamber with the active sites is on the inside of the barrel.

The protein localises to the cytoplasm. It localises to the nucleus. In terms of biological role, non-catalytic component of the proteasome, a multicatalytic proteinase complex which is characterized by its ability to cleave peptides with Arg, Phe, Tyr, Leu, and Glu adjacent to the leaving group at neutral or slightly basic pH. The proteasome has an ATP-dependent proteolytic activity. The sequence is that of Probable proteasome subunit beta type-4 (CPR1) from Cryptococcus neoformans var. neoformans serotype D (strain B-3501A) (Filobasidiella neoformans).